We begin with the raw amino-acid sequence, 418 residues long: 3-isopropylmalate dehydratase large subunit (418 aa).

Positions 297, 357, and 360 each coordinate [4Fe-4S] cluster.

The protein belongs to the aconitase/IPM isomerase family. LeuC type 2 subfamily. In terms of assembly, heterodimer of LeuC and LeuD. [4Fe-4S] cluster serves as cofactor.

It catalyses the reaction (2R,3S)-3-isopropylmalate = (2S)-2-isopropylmalate. It functions in the pathway amino-acid biosynthesis; L-leucine biosynthesis; L-leucine from 3-methyl-2-oxobutanoate: step 2/4. Its function is as follows. Catalyzes the isomerization between 2-isopropylmalate and 3-isopropylmalate, via the formation of 2-isopropylmaleate. The chain is 3-isopropylmalate dehydratase large subunit from Elusimicrobium minutum (strain Pei191).